We begin with the raw amino-acid sequence, 284 residues long: Proline-rich protein 32 (284 aa).

3 disordered regions span residues 59–80, 97–119, and 143–171; these read RPPF…APRH, EINS…NMSQ, and SGNN…RGPP.

The polypeptide is Proline-rich protein 32 (Prr32) (Mus musculus (Mouse)).